Reading from the N-terminus, the 951-residue chain is Coiled-coil domain-containing protein 15 (951 aa).

Coiled-coil stretches lie at residues 64 to 89 (LIEE…QVKY), 154 to 193 (DGIE…VIKK), 782 to 813 (MDIE…EQEC), and 839 to 874 (LAQL…IQEK).

Interacts with POC5, POC1B, CETN2 and FAM161A.

The protein resides in the cytoplasm. It is found in the cytoskeleton. It localises to the microtubule organizing center. The protein localises to the centrosome. Its subcellular location is the centriole. The protein resides in the centriolar satellite. Plays an important role in primary cilium assembly, maintenance, and length regulation. Interacts with centriole inner scaffold proteins to promote proper centriole size and integrity and assembly of functional cilia. Required for the recruitment of both the inner scaffold protein POC1B and the distal SFI1/CETN2 complex to centrioles. This Homo sapiens (Human) protein is Coiled-coil domain-containing protein 15 (CCDC15).